Consider the following 342-residue polypeptide: Uroporphyrinogen decarboxylase (342 aa).

Residues 26-30 (RQAGR), Asp-76, Tyr-150, Ser-205, and His-321 contribute to the substrate site.

This sequence belongs to the uroporphyrinogen decarboxylase family. Homodimer.

The protein localises to the cytoplasm. It catalyses the reaction uroporphyrinogen III + 4 H(+) = coproporphyrinogen III + 4 CO2. Its pathway is porphyrin-containing compound metabolism; protoporphyrin-IX biosynthesis; coproporphyrinogen-III from 5-aminolevulinate: step 4/4. Catalyzes the decarboxylation of four acetate groups of uroporphyrinogen-III to yield coproporphyrinogen-III. This Sphingopyxis alaskensis (strain DSM 13593 / LMG 18877 / RB2256) (Sphingomonas alaskensis) protein is Uroporphyrinogen decarboxylase.